Reading from the N-terminus, the 215-residue chain is Cytochrome c biogenesis ATP-binding export protein CcmA (215 aa).

In terms of domain architecture, ABC transporter spans 3 to 211; it reads LTAEILAARR…KMTGFAGVDN (209 aa). 35–42 contributes to the ATP binding site; the sequence is GKNGSGKS.

The protein belongs to the ABC transporter superfamily. CcmA exporter (TC 3.A.1.107) family. In terms of assembly, the complex is composed of two ATP-binding proteins (CcmA) and two transmembrane proteins (CcmB).

Its subcellular location is the cell inner membrane. The catalysed reaction is heme b(in) + ATP + H2O = heme b(out) + ADP + phosphate + H(+). Its function is as follows. Part of the ABC transporter complex CcmAB involved in the biogenesis of c-type cytochromes; once thought to export heme, this seems not to be the case, but its exact role is uncertain. Responsible for energy coupling to the transport system. This chain is Cytochrome c biogenesis ATP-binding export protein CcmA, found in Rhizobium johnstonii (strain DSM 114642 / LMG 32736 / 3841) (Rhizobium leguminosarum bv. viciae).